We begin with the raw amino-acid sequence, 398 residues long: Protein RecA (398 aa).

Residue 83–90 participates in ATP binding; the sequence is GPESSGKT. Positions 351 to 398 are disordered; that stretch reads AGQKNDKKSKLEEKANAGAGISEASEPDSSAEEDFEEFAPIDIGSLGE. Residues 354–365 are compositionally biased toward basic and acidic residues; that stretch reads KNDKKSKLEEKA. Residues 375–389 are compositionally biased toward acidic residues; the sequence is SEPDSSAEEDFEEFA.

The protein belongs to the RecA family.

Its subcellular location is the cytoplasm. Its function is as follows. Can catalyze the hydrolysis of ATP in the presence of single-stranded DNA, the ATP-dependent uptake of single-stranded DNA by duplex DNA, and the ATP-dependent hybridization of homologous single-stranded DNAs. It interacts with LexA causing its activation and leading to its autocatalytic cleavage. The protein is Protein RecA of Ruminococcus albus (strain ATCC 27210 / DSM 20455 / JCM 14654 / NCDO 2250 / 7).